Here is a 930-residue protein sequence, read N- to C-terminus: Translation initiation factor IF-2 (930 aa).

The interval 27–342 is disordered; that stretch reads LGLDVKSHSS…APKPVTERKF (316 aa). A compositionally biased stretch (low complexity) spans 52 to 103; sequence KAAAPQAPAEKPVAAQPSPQKTPAKEAAPVKAEPTEAKAAAQPEAKTETAAP. Basic and acidic residues-rich tracts occupy residues 112–128 and 136–178; these read FKAEREARAKEEAERRK and QNKE…DGRR. The segment covering 183 to 195 has biased composition (polar residues); the sequence is HQGFNGQKRQQPQ. The segment covering 218-245 has biased composition (basic and acidic residues); the sequence is RSSEERFKQAQEAKEVMERQNRRKEQPK. Residues 251–268 are compositionally biased toward pro residues; sequence PVQPAPAPSAPAANPSPA. Positions 280 to 297 are enriched in basic and acidic residues; the sequence is ARPDKKRDDFDREEEGPR. Residues 302 to 318 are compositionally biased toward low complexity; sequence NRSSQNQVRNQRNSNWN. Positions 432–599 constitute a tr-type G domain; it reads ERPPVVTIMG…TVLLVAEIQE (168 aa). Residues 441–448 form a G1 region; the sequence is GHVDHGKT. GTP is bound at residue 441–448; the sequence is GHVDHGKT. The interval 466–470 is G2; that stretch reads GITQH. Positions 487-490 are G3; the sequence is DTPG. Residues 487-491 and 541-544 each bind GTP; these read DTPGH and NKID. Residues 541-544 form a G4 region; the sequence is NKID. The tract at residues 577–579 is G5; that stretch reads SAK.

The protein belongs to the TRAFAC class translation factor GTPase superfamily. Classic translation factor GTPase family. IF-2 subfamily.

Its subcellular location is the cytoplasm. One of the essential components for the initiation of protein synthesis. Protects formylmethionyl-tRNA from spontaneous hydrolysis and promotes its binding to the 30S ribosomal subunits. Also involved in the hydrolysis of GTP during the formation of the 70S ribosomal complex. The polypeptide is Translation initiation factor IF-2 (Streptococcus sanguinis (strain SK36)).